The primary structure comprises 213 residues: 2-C-methyl-D-erythritol 4-phosphate cytidylyltransferase (213 aa).

It belongs to the IspD/TarI cytidylyltransferase family. IspD subfamily.

It catalyses the reaction 2-C-methyl-D-erythritol 4-phosphate + CTP + H(+) = 4-CDP-2-C-methyl-D-erythritol + diphosphate. The protein operates within isoprenoid biosynthesis; isopentenyl diphosphate biosynthesis via DXP pathway; isopentenyl diphosphate from 1-deoxy-D-xylulose 5-phosphate: step 2/6. Functionally, catalyzes the formation of 4-diphosphocytidyl-2-C-methyl-D-erythritol from CTP and 2-C-methyl-D-erythritol 4-phosphate (MEP). The sequence is that of 2-C-methyl-D-erythritol 4-phosphate cytidylyltransferase from Thermus thermophilus (strain ATCC BAA-163 / DSM 7039 / HB27).